Here is a 173-residue protein sequence, read N- to C-terminus: Ribosome maturation factor RimM (173 aa).

In terms of domain architecture, PRC barrel spans 98-170 (EGEFYWCDLI…IMTVSPTEGL (73 aa)).

The protein belongs to the RimM family. In terms of assembly, binds ribosomal protein uS19.

The protein localises to the cytoplasm. In terms of biological role, an accessory protein needed during the final step in the assembly of 30S ribosomal subunit, possibly for assembly of the head region. Essential for efficient processing of 16S rRNA. May be needed both before and after RbfA during the maturation of 16S rRNA. It has affinity for free ribosomal 30S subunits but not for 70S ribosomes. The chain is Ribosome maturation factor RimM from Geobacter metallireducens (strain ATCC 53774 / DSM 7210 / GS-15).